The primary structure comprises 314 residues: Taste receptor type 2 member 42 (314 aa).

Over 1 to 7 (MATELDK) the chain is Extracellular. A helical membrane pass occupies residues 8-28 (IFLILEIAEFIIGMLGNVFIG). Topologically, residues 29–50 (LVNCSEGIKNQKVFSADFILTC) are cytoplasmic. Residues 51 to 71 (LAISTIGQLFVILFDSFLVGL) form a helical membrane-spanning segment. The Extracellular segment spans residues 72 to 101 (ASHLYTTYRLGKPVIMLWHMTNHLTTWLAT). A helical transmembrane segment spans residues 102-122 (CLSIFYFFKIAHFPHSLFLWL). The Cytoplasmic portion of the chain corresponds to 123-127 (RWRMN). A helical membrane pass occupies residues 128-148 (GMIVMLLILSLFLLIFDSLVL). The Extracellular portion of the chain corresponds to 149–187 (EIFIDISLNIIDKSNLTLYLDESKTLYDKLSILKTLLSL). N-linked (GlcNAc...) asparagine glycosylation occurs at N163. A helical transmembrane segment spans residues 188-208 (TSFIPFSLSLTSLLFFFLSLV). The Cytoplasmic portion of the chain corresponds to 209–238 (RHTRNLKLSSLGSRDSSTEAHRRAMKMVMS). The helical transmembrane segment at 239–259 (FLFLFIVHFFSLQVANWIFFM) threads the bilayer. The Extracellular portion of the chain corresponds to 260 to 265 (LWNNKY). A helical membrane pass occupies residues 266 to 286 (IKFAMLALNAFPSCHSFILIL). Over 287 to 314 (GNSKLRQTAVRLLWHLRNYTKTPNALPL) the chain is Cytoplasmic.

This sequence belongs to the G-protein coupled receptor T2R family.

Its subcellular location is the membrane. Its function is as follows. Receptor that may play a role in the perception of bitterness and is gustducin-linked. May play a role in sensing the chemical composition of the gastrointestinal content. The activity of this receptor may stimulate alpha gustducin, mediate PLC-beta-2 activation and lead to the gating of TRPM5. In Pan paniscus (Pygmy chimpanzee), this protein is Taste receptor type 2 member 42 (TAS2R42).